The chain runs to 247 residues: Lipoprotein-releasing system ATP-binding protein LolD 2 (247 aa).

Positions 19–247 constitute an ABC transporter domain; the sequence is LEARKLVKSY…QDGRLQACGG (229 aa). 56–63 lines the ATP pocket; that stretch reads GASGSGKT.

This sequence belongs to the ABC transporter superfamily. Lipoprotein translocase (TC 3.A.1.125) family. The complex is composed of two ATP-binding proteins (LolD) and two transmembrane proteins (LolC and LolE).

It localises to the cell inner membrane. Functionally, part of the ABC transporter complex LolCDE involved in the translocation of mature outer membrane-directed lipoproteins, from the inner membrane to the periplasmic chaperone, LolA. Responsible for the formation of the LolA-lipoprotein complex in an ATP-dependent manner. This Chlorobaculum tepidum (strain ATCC 49652 / DSM 12025 / NBRC 103806 / TLS) (Chlorobium tepidum) protein is Lipoprotein-releasing system ATP-binding protein LolD 2.